A 124-amino-acid polypeptide reads, in one-letter code: Small ribosomal subunit protein uS12 (124 aa).

The disordered stretch occupies residues 1–32; sequence MPTIQQLVRKGRQAKASKTKTPALKGSPQRRG. The span at 9-18 shows a compositional bias: basic residues; the sequence is RKGRQAKASK. Position 89 is a 3-methylthioaspartic acid (D89).

This sequence belongs to the universal ribosomal protein uS12 family. In terms of assembly, part of the 30S ribosomal subunit. Contacts proteins S8 and S17. May interact with IF1 in the 30S initiation complex.

In terms of biological role, with S4 and S5 plays an important role in translational accuracy. Interacts with and stabilizes bases of the 16S rRNA that are involved in tRNA selection in the A site and with the mRNA backbone. Located at the interface of the 30S and 50S subunits, it traverses the body of the 30S subunit contacting proteins on the other side and probably holding the rRNA structure together. The combined cluster of proteins S8, S12 and S17 appears to hold together the shoulder and platform of the 30S subunit. This Acidothermus cellulolyticus (strain ATCC 43068 / DSM 8971 / 11B) protein is Small ribosomal subunit protein uS12.